Here is an 881-residue protein sequence, read N- to C-terminus: Alanine--tRNA ligase (881 aa).

The span at Phe422–Glu440 shows a compositional bias: basic and acidic residues. Residues Phe422–Val445 are disordered. Residues His567, His571, Cys669, and His673 each coordinate Zn(2+).

The protein belongs to the class-II aminoacyl-tRNA synthetase family. It depends on Zn(2+) as a cofactor.

The protein resides in the cytoplasm. The catalysed reaction is tRNA(Ala) + L-alanine + ATP = L-alanyl-tRNA(Ala) + AMP + diphosphate. Catalyzes the attachment of alanine to tRNA(Ala) in a two-step reaction: alanine is first activated by ATP to form Ala-AMP and then transferred to the acceptor end of tRNA(Ala). Also edits incorrectly charged Ser-tRNA(Ala) and Gly-tRNA(Ala) via its editing domain. In Pediococcus pentosaceus (strain ATCC 25745 / CCUG 21536 / LMG 10740 / 183-1w), this protein is Alanine--tRNA ligase.